The primary structure comprises 402 residues: Adenylyltransferase and sulfurtransferase MOCS3 (402 aa).

Residues G47, D68, 75 to 79 (DNLHR), K92, and 136 to 137 (DN) each bind ATP. 2 residues coordinate Zn(2+): C178 and C181. C195 functions as the Glycyl thioester intermediate; for adenylyltransferase activity in the catalytic mechanism. Residues C253 and C256 each coordinate Zn(2+). Positions 303–400 (AARKQFLLDT…WALKINDEFP (98 aa)) constitute a Rhodanese domain. C359 functions as the Cysteine persulfide intermediate; for sulfurtransferase activity in the catalytic mechanism.

The protein in the N-terminal section; belongs to the HesA/MoeB/ThiF family. UBA4 subfamily. Requires Zn(2+) as cofactor.

The protein resides in the cytoplasm. The protein localises to the cytosol. It catalyses the reaction [molybdopterin-synthase sulfur-carrier protein]-C-terminal Gly-Gly + ATP + H(+) = [molybdopterin-synthase sulfur-carrier protein]-C-terminal Gly-Gly-AMP + diphosphate. It carries out the reaction [molybdopterin-synthase sulfur-carrier protein]-C-terminal Gly-Gly-AMP + S-sulfanyl-L-cysteinyl-[cysteine desulfurase] + AH2 = [molybdopterin-synthase sulfur-carrier protein]-C-terminal-Gly-aminoethanethioate + L-cysteinyl-[cysteine desulfurase] + A + AMP + 2 H(+). It functions in the pathway tRNA modification; 5-methoxycarbonylmethyl-2-thiouridine-tRNA biosynthesis. The protein operates within cofactor biosynthesis; molybdopterin biosynthesis. Plays a central role in 2-thiolation of mcm(5)S(2)U at tRNA wobble positions of cytosolic tRNA(Lys), tRNA(Glu) and tRNA(Gln). Also essential during biosynthesis of the molybdenum cofactor. Acts by mediating the C-terminal thiocarboxylation of sulfur carriers URM1 and MOCS2A. Its N-terminus first activates URM1 and MOCS2A as acyl-adenylates (-COAMP), then the persulfide sulfur on the catalytic cysteine is transferred to URM1 and MOCS2A to form thiocarboxylation (-COSH) of their C-terminus. The reaction probably involves hydrogen sulfide that is generated from the persulfide intermediate and that acts as a nucleophile towards URM1 and MOCS2A. Subsequently, a transient disulfide bond is formed. Does not use thiosulfate as sulfur donor; NFS1 probably acting as a sulfur donor for thiocarboxylation reactions. The sequence is that of Adenylyltransferase and sulfurtransferase MOCS3 from Caenorhabditis briggsae.